A 940-amino-acid polypeptide reads, in one-letter code: MAKYKETLNLPKTAFPMKANLAQREPQALKRWQAMDLYGKLRNAARGRPRFILHDGPPYANGAIHIGHAVNKILKDIIVKSKSLSGFDAPYVPGWDCHGLPIELNVEKKVGKPGRKIDVASFRRACRDYARKQVNAQREDFERLGVLGDWCHPYLTMDYQFEADVIRTLGKIIEKGHLHKGVKPVHWCVDCGSALAEAEVEYQEKTSPAIDVRFPVVEEVELLARCKAEIPGAGPMSVVIWTTTPWTLPANQAVALHPALKYVLVECSAGQGRERLLLAEGLYREVLARYSAESAVILATCQGDELEGLKLQHPFYERTVPIILGEHVNLEAGTGAVHTAPGHGQDDYVVGNRYQLSIDNPVGGNGCFLPETPLFAGEPVFKANDHIIQVLKERGNLLREQSLQHSYPHCWRHKTPIIFRATPQWFINMEREGLRTAALAEIKKTRWLPGWGQQRIEGMVENRPDWCISRQRAWGTPIPLFVHCQTGELHPDTPRLMEEVARRVEEKGIEAWFELEPKELLGNQAPAYEKVGDTLDVWFDSGVTHTCVLETREELGVPADLYLEGSDQHRGWFQSSLLTSVAIRGTAPYRMVLTHGFTVDAKGKKMSKSQGNVVAPQQVMGSLGADILRLWVAATDYRGEMNVSDEILKRIADSYRRMRNTARYLLANLNGFDPTIHGVPAKDMLALDRWALDRASLLQGEIVQAYEDYNFHLIYQRVHNFCAVDMGAIYLDIIKDRQYTTQADSRARRSAQTAMYHIAEALVRWLAPVLSFTADEIWQYLPGERGESVFLTTWYEDLPSLGEEAPWGRAFWDVILAAREAIAKVLEGVRVEGRIGSSLDAEVDLYVEESLYQALRKLGDELRFVLITSYARVYPAQKRPVEALETEMPGLWTVVIPSHYPKCVRCWHHREEVGSHEDHPELCSRCVENTEGGGEQRAFA.

The short motif at 58-68 is the 'HIGH' region element; that stretch reads PYANGAIHIGH. Glu-564 contributes to the L-isoleucyl-5'-AMP binding site. The 'KMSKS' region signature appears at 605–609; it reads KMSKS. Position 608 (Lys-608) interacts with ATP. Positions 903, 906, 923, and 926 each coordinate Zn(2+).

Belongs to the class-I aminoacyl-tRNA synthetase family. IleS type 1 subfamily. In terms of assembly, monomer. The cofactor is Zn(2+).

The protein localises to the cytoplasm. The enzyme catalyses tRNA(Ile) + L-isoleucine + ATP = L-isoleucyl-tRNA(Ile) + AMP + diphosphate. Its function is as follows. Catalyzes the attachment of isoleucine to tRNA(Ile). As IleRS can inadvertently accommodate and process structurally similar amino acids such as valine, to avoid such errors it has two additional distinct tRNA(Ile)-dependent editing activities. One activity is designated as 'pretransfer' editing and involves the hydrolysis of activated Val-AMP. The other activity is designated 'posttransfer' editing and involves deacylation of mischarged Val-tRNA(Ile). The polypeptide is Isoleucine--tRNA ligase (Nitrosococcus oceani (strain ATCC 19707 / BCRC 17464 / JCM 30415 / NCIMB 11848 / C-107)).